The sequence spans 396 residues: S-arrestin (396 aa).

Belongs to the arrestin family.

In terms of biological role, arrestin is one of the major proteins of the ros (retinal rod outer segments); it binds to photoactivated-phosphorylated rhodopsin, thereby apparently preventing the transducin-mediated activation of phosphodiesterase. This chain is S-arrestin, found in Lithobates pipiens (Northern leopard frog).